The following is a 593-amino-acid chain: Meiosis-specific APC/C activator protein AMA1 (593 aa).

Positions 1-11 (MATPHLYHRYN) are enriched in basic residues. The segment at 1–26 (MATPHLYHRYNSKSSNKNINSSGNST) is disordered. Positions 12-25 (SKSSNKNINSSGNS) are enriched in low complexity. Positions 29 to 35 (DRFIPKS) match the C-box motif. A compositionally biased stretch (low complexity) spans 94-109 (SSISSSSESQVTRSGS). The disordered stretch occupies residues 94 to 125 (SSISSSSESQVTRSGSARASRNDYSKLTKEQK). A compositionally biased stretch (basic and acidic residues) spans 113 to 125 (SRNDYSKLTKEQK). WD repeat units follow at residues 226-264 (RNDF…VSIL), 271-310 (EKRD…HSSN), 323-364 (ESFK…FPIK), 388-427 (AQAQ…KPIK), 432-474 (PHKA…LLDE), and 525-564 (PNPL…EEII).

It belongs to the WD repeat CDC20/Fizzy family. Interacts with CDC16.

In terms of biological role, activator protein that regulates the ubiquitin ligase activity and substrate specificity of the anaphase promoting complex/cyclosome (APC/C). Required for the ubiquitination and subsequent degradation of the B-type cyclin CLB1 by the APC/C complex during meiosis. Required for meiosis I, late meiotic gene expression and spore wall assembly. The sequence is that of Meiosis-specific APC/C activator protein AMA1 (AMA1) from Saccharomyces cerevisiae (strain ATCC 204508 / S288c) (Baker's yeast).